Here is a 332-residue protein sequence, read N- to C-terminus: Heat-inducible transcription repressor HrcA (332 aa).

This sequence belongs to the HrcA family.

Functionally, negative regulator of class I heat shock genes (grpE-dnaK-dnaJ and groELS operons). Prevents heat-shock induction of these operons. This Mycoplasma mobile (strain ATCC 43663 / 163K / NCTC 11711) (Mesomycoplasma mobile) protein is Heat-inducible transcription repressor HrcA.